We begin with the raw amino-acid sequence, 415 residues long: Tyrosine--tRNA ligase (415 aa).

Tyrosine 40 is a binding site for L-tyrosine. Positions alanine 45–serine 54 match the 'HIGH' region motif. Tyrosine 178 and glutamine 182 together coordinate L-tyrosine. The 'KMSKS' region motif lies at lysine 238–serine 242. Residue lysine 241 coordinates ATP. The 65-residue stretch at alanine 350–leucine 414 folds into the S4 RNA-binding domain.

It belongs to the class-I aminoacyl-tRNA synthetase family. TyrS type 1 subfamily. In terms of assembly, homodimer.

The protein localises to the cytoplasm. It catalyses the reaction tRNA(Tyr) + L-tyrosine + ATP = L-tyrosyl-tRNA(Tyr) + AMP + diphosphate + H(+). Catalyzes the attachment of tyrosine to tRNA(Tyr) in a two-step reaction: tyrosine is first activated by ATP to form Tyr-AMP and then transferred to the acceptor end of tRNA(Tyr). This is Tyrosine--tRNA ligase from Ruegeria pomeroyi (strain ATCC 700808 / DSM 15171 / DSS-3) (Silicibacter pomeroyi).